A 769-amino-acid chain; its full sequence is Polymeric immunoglobulin receptor (769 aa).

The signal sequence occupies residues 1–18 (MRLSLFALLVTVFSGVST). At 19–643 (QSPIFGPQDV…SAGGQSGSSK (625 aa)) the chain is on the extracellular side. The Ig-like V-type 1; required for binding to polymeric IgA and IgM domain occupies 21-126 (PIFGPQDVSS…RGLFFDVSLE (106 aa)). Cys-40 and Cys-110 form a disulfide bridge. N-linked (GlcNAc...) asparagine glycosylation is found at Asn-90, Asn-135, and Asn-206. Ig-like V-type domains follow at residues 135–237 (NDTH…DLQV), 240–341 (PEPE…VQAW), 353–457 (NSRS…LQVA), and 463–563 (PDLE…IYVA). 3 cysteine pairs are disulfide-bonded: Cys-152–Cys-220, Cys-257–Cys-324, and Cys-370–Cys-440. Asn-471 is a glycosylation site (N-linked (GlcNAc...) asparagine). An intrachain disulfide couples Cys-484 to Cys-546. 2 disordered regions span residues 569–604 (RGSP…NKAN) and 619–640 (AGDQ…GQSG). Basic and acidic residues predominate over residues 595-604 (SVREDENKAN). The helical transmembrane segment at 644 to 666 (VLFSTLVPLGLVLAVGAVAVWVA) threads the bilayer. Over 667–769 (RVRHRKNVDR…AQVHDGPQEA (103 aa)) the chain is Cytoplasmic. A phosphoserine mark is found at Ser-678, Ser-687, Ser-694, and Ser-740. The interval 719 to 741 (EIETTTECTTEPEESKKAKRSSK) is disordered. A compositionally biased stretch (basic and acidic residues) spans 731–741 (EESKKAKRSSK).

Interacts (mainly via CDR1-like domain) with dimeric IgA. Interacts (mainly via CDR2-like domain) with pentameric IgM. In terms of assembly, either free or part of the secretory IgA (sIgA) complex that consists of two, four or five IgA monomers, and two additional non-Ig polypeptides, namely the JCHAIN and the secretory component (the proteolytic product of PIGR). Free secretory component interacts with bacterial antigens toxA of C.difficile and eae of E.coli. In terms of processing, N-glycosylated. N-glycosylation is required for anchoring IgA molecules to mucus, but is not necessary for Ig binding.

The protein resides in the cell membrane. It is found in the secreted. In terms of biological role, mediates selective transcytosis of polymeric IgA and IgM across mucosal epithelial cells. Binds polymeric IgA and IgM at the basolateral surface of epithelial cells. The complex is then transported across the cell to be secreted at the apical surface. During this process, a cleavage occurs that separates the extracellular (known as the secretory component) from the transmembrane segment. Through its N-linked glycans ensures anchoring of secretory IgA (sIgA) molecules to mucus lining the epithelial surface to neutralize extracellular pathogens. On its own (free form) may act as a non-specific microbial scavenger to prevent pathogen interaction with epithelial cells. This is Polymeric immunoglobulin receptor (Pigr) from Rattus norvegicus (Rat).